A 302-amino-acid polypeptide reads, in one-letter code: Aspartate carbamoyltransferase catalytic subunit (302 aa).

2 residues coordinate carbamoyl phosphate: Arg-53 and Thr-54. Lys-82 serves as a coordination point for L-aspartate. Carbamoyl phosphate is bound by residues Arg-103, His-131, and Gln-134. L-aspartate is bound by residues Arg-164 and Arg-223. Carbamoyl phosphate contacts are provided by Leu-260 and Pro-261.

Belongs to the aspartate/ornithine carbamoyltransferase superfamily. ATCase family. In terms of assembly, heterooligomer of catalytic and regulatory chains.

The enzyme catalyses carbamoyl phosphate + L-aspartate = N-carbamoyl-L-aspartate + phosphate + H(+). It participates in pyrimidine metabolism; UMP biosynthesis via de novo pathway; (S)-dihydroorotate from bicarbonate: step 2/3. In terms of biological role, catalyzes the condensation of carbamoyl phosphate and aspartate to form carbamoyl aspartate and inorganic phosphate, the committed step in the de novo pyrimidine nucleotide biosynthesis pathway. The polypeptide is Aspartate carbamoyltransferase catalytic subunit (Methanococcus vannielii (strain ATCC 35089 / DSM 1224 / JCM 13029 / OCM 148 / SB)).